Consider the following 531-residue polypeptide: Type 2 DNA topoisomerase 6 subunit B (531 aa).

Residues asparagine 42, aspartate 76, 97–98 (SK), 106–113 (GMYGLGVK), and lysine 427 contribute to the ATP site.

Belongs to the TOP6B family. Homodimer. Heterotetramer of two Top6A and two Top6B chains.

The catalysed reaction is ATP-dependent breakage, passage and rejoining of double-stranded DNA.. Relaxes both positive and negative superturns and exhibits a strong decatenase activity. In Metallosphaera sedula (strain ATCC 51363 / DSM 5348 / JCM 9185 / NBRC 15509 / TH2), this protein is Type 2 DNA topoisomerase 6 subunit B.